A 215-amino-acid chain; its full sequence is Protein Thf1 (215 aa).

Positions 188 to 209 form a coiled coil; the sequence is IELVQETIAAERRKKERRQAEQ.

Belongs to the THF1 family.

Functionally, may be involved in photosynthetic membrane biogenesis. This is Protein Thf1 from Synechococcus sp. (strain CC9902).